We begin with the raw amino-acid sequence, 341 residues long: MPSEIVDRKRKSRGTRDVAEILRQWREYNEQIEAESCIDGGGPKSIRKPPPKGSRKGCMKGKGGPENGICDYRGVRQRRWGKWVAEIREPDGGARLWLGTFSSSYEAALAYDEAAKAIYGQSARLNLPEITNRSSSTAATATVSGSVTAFSDESEVCAREDTNASSGFGQVKLEDCSDEYVLLDSSQCIKEELKGKEEVREEHNLAVGFGIGQDSKRETLDAWLMGNGNEQEPLEFGVDETFDINELLGILNDNNVSGQETMQYQVDRHPNFSYQTQFPNSNLLGSLNPMEIAQPGVDYGCPYVQPSDMENYGIDLDHRRFNDLDIQDLDFGGDKDVHGST.

The short motif at 8–48 is the Nuclear localization signal element; sequence RKRKSRGTRDVAEILRQWREYNEQIEAESCIDGGGPKSIRK. A disordered region spans residues 36–63; sequence SCIDGGGPKSIRKPPPKGSRKGCMKGKG. Residues 45–59 show a composition bias toward basic residues; that stretch reads SIRKPPPKGSRKGCM. Positions 71–128 form a DNA-binding region, AP2/ERF; that stretch reads DYRGVRQRRWGKWVAEIREPDGGARLWLGTFSSSYEAALAYDEAAKAIYGQSARLNLP.

The protein belongs to the AP2/ERF transcription factor family. ERF subfamily.

The protein resides in the nucleus. Functionally, transcriptional activator that binds specifically to the DNA sequence 5'-[AG]CCGAC-3'. Binding to the C-repeat/DRE element mediates high salinity- and abscisic acid-inducible transcription. The chain is Dehydration-responsive element-binding protein 2C (DREB2C) from Arabidopsis thaliana (Mouse-ear cress).